The sequence spans 97 residues: YcgL domain-containing protein PFL_1496 (97 aa).

In terms of domain architecture, YcgL spans R3–P87.

The sequence is that of YcgL domain-containing protein PFL_1496 from Pseudomonas fluorescens (strain ATCC BAA-477 / NRRL B-23932 / Pf-5).